The following is a 60-amino-acid chain: Pepsin A (60 aa).

Residues 1 to 45 (FIIKVPLVKKKSLRKNLKEHGLLKDFLKKHSPNPASKYFPQEAAV) constitute a propeptide, activation peptide.

This sequence belongs to the peptidase A1 family.

It is found in the secreted. The enzyme catalyses Preferential cleavage: hydrophobic, preferably aromatic, residues in P1 and P1' positions. Cleaves 1-Phe-|-Val-2, 4-Gln-|-His-5, 13-Glu-|-Ala-14, 14-Ala-|-Leu-15, 15-Leu-|-Tyr-16, 16-Tyr-|-Leu-17, 23-Gly-|-Phe-24, 24-Phe-|-Phe-25 and 25-Phe-|-Tyr-26 bonds in the B chain of insulin.. Functionally, shows particularly broad specificity; although bonds involving phenylalanine and leucine are preferred, many others are also cleaved to some extent. The sequence is that of Pepsin A (PGA) from Ursus thibetanus (Asiatic black bear).